Here is a 201-residue protein sequence, read N- to C-terminus: MECKREEGKSYVKRGLWKPEEDMILKSYVETHGEGNWADISRRSGLKRGGKSCRLRWKNYLRPNIKRGSMSPQEQDLIIRMHKLLGNRWSLIAGRLPGRTDNEVKNYWNTHLNKKPNSRRQNAPESIVGATPFTDKPVMSTELRRSHGEGGEEESNTWMEETNHFGYDVHVGSPLPLISHYPDNTLVFDPCFSFTDFFPLL.

HTH myb-type domains are found at residues 9–61 (KSYV…KNYL) and 62–116 (RPNI…NKKP). DNA-binding regions (H-T-H motif) lie at residues 37 to 61 (WADI…KNYL) and 89 to 112 (WSLI…NTHL). A disordered region spans residues 112–133 (LNKKPNSRRQNAPESIVGATPF).

In terms of assembly, homodimer and heterodimer with GL1. Part of the WD40-bHLH-MYB complex. Interacts with BHLH012/MYC1 and BHLH042/TT8. Interacts (via N-terminus) with GL1 and GL3. Mainly expressed in the trichomes of new leaves.

It localises to the nucleus. Its function is as follows. Transcription activation factor positively regulating trichomes development. Has a function nearly equivalent to that of GL1 and can complement gl1 mutants. The protein is Transcription factor MYB82 (MYB82) of Arabidopsis thaliana (Mouse-ear cress).